The following is a 1337-amino-acid chain: Zinc finger protein 335 (1337 aa).

2 disordered regions span residues 1-108 (MEEN…LVHS) and 198-226 (GPTSTSACLEPPEEPQGDPSSVAQQPPAP). Low complexity-rich tracts occupy residues 31 to 45 (TSEAVSADSSDAATV) and 54 to 63 (SGVGQSSDGG). A C2H2-type 1 zinc finger spans residues 248–271 (FKCKMCQYRSSTKATLLRHMRERH). The interval 278-444 (AAAAATGKRG…PPRRRGRPSR (167 aa)) is disordered. Over residues 302–332 (DRPEEEEEDDDIVDAGAIDDLEEDSDYNPAE) the composition is skewed to acidic residues. Over residues 351 to 362 (RPRRRPGRPRKL) the composition is skewed to basic residues. Basic and acidic residues predominate over residues 363–372 (PRLETSDLHD). Residues 378–388 (LVSSQSTQSPP) are compositionally biased toward polar residues. 8 C2H2-type zinc fingers span residues 466–488 (YLCRICGSRFLSHEDLRFHVNSH), 496–518 (FRCLQCSYRSRRWSSLKEHMFNH), 524–546 (YKCDECSYTSVYRKDVIRHAAVH), 563–585 (FPCPVCGRVYPMQKRLTQHMKTH), 591–613 (HMCDKCGKSFKKRYTFKMHLLTH), 622–644 (FKCEFCEFVCEDKKALLNHQLSH), 650–673 (FKCSFCPYRTFREDFLLSHVAVKH), and 679–702 (FACEYCHFSTRHKKNLRLHVRCRH). Disordered regions lie at residues 733-767 (LKQQHSTAPGPPLSSPGPEAPQEPAPFQSPETPPL) and 963-999 (QCGGPPRDGSEVLSPTKTHHMGGSQGSSTPPPAASHT). Pro residues predominate over residues 741 to 756 (PGPPLSSPGPEAPQEP). A phosphoserine mark is found at Ser-976 and Ser-1007. 4 C2H2-type zinc fingers span residues 1019–1041 (FSCKVCSEAFPSRAEMESHKRAH), 1047–1069 (FKCPDCPFSARQWPEVRAHMAQH), 1075–1097 (HQCNQCSFASKNKKDLRRHMLTH), and 1103–1126 (FSCHVCGQRFNRNGHLKFHIQRLH). Lys-1022 participates in a covalent cross-link: Glycyl lysine isopeptide (Lys-Gly) (interchain with G-Cter in SUMO2). Ser-1149 is modified (phosphoserine).

This sequence belongs to the krueppel C2H2-type zinc-finger protein family. As to quaternary structure, interacts with NCOA6; may enhance ligand-dependent transcriptional activation by nuclear hormone receptors. Interacts with CNOT6. Interacts with CNOT9; the interaction is direct. Component of a nuclear receptor-mediated transcription complex composed of at least ZNF335, CCAR2 and EMSY; the complex stimulates the transcription of nuclear receptor target genes such as SOX9 and HOXA1. Within the complex interacts with EMSY and interacts (via C-terminus) with CCAR2. Interacts with members of histone H3'Lys4'(H3K4) methyltransferase complexes ASH2L, CXXC1, KMT2A/MLL1, RBBP5, SETD1A and WDR5. Component of a histone methylation complex composed of at least ZNF335, RBBP5, ASH2L and WDR5; the complex may have histone H3-specific methyltransferase activity, however does not have specificity for 'Lys-4' of histone H3. Interacts with RBBP5 and WDR5. Interacts with ASHL2. Components of this complex may associate with components of the ZNF335-CCAR2-EMSY nuclear receptor-mediated transcription complex to form a complex at least composed of ZNF335, HCFC1, CCAR2, EMSY, MKI67, RBBP5, ASH2L and WDR5. Within this complex also interacts with HCFC1 and MKI67. As to expression, expressed at low levels in cerebral cortex, hippocampus and cerebellum (at protein level).

Its subcellular location is the nucleus. In terms of biological role, component or associated component of some histone methyltransferase complexes may regulate transcription through recruitment of those complexes on gene promoters. Enhances ligand-dependent transcriptional activation by nuclear hormone receptors. Plays an important role in neural progenitor cell proliferation and self-renewal through the regulation of specific genes involved brain development, including REST. Also controls the expression of genes involved in somatic development and regulates, for instance, lymphoblast proliferation. The chain is Zinc finger protein 335 (Znf335) from Mus musculus (Mouse).